A 386-amino-acid polypeptide reads, in one-letter code: Succinate--CoA ligase [ADP-forming] subunit beta (386 aa).

An ATP-grasp domain is found at 9–244 (KEILRNFGVP…LDEEDPAEVE (236 aa)). ATP contacts are provided by residues K46, 53-55 (GRG), E99, A102, and E107. Mg(2+)-binding residues include N199 and D213. Substrate contacts are provided by residues N264 and 321-323 (GIM).

It belongs to the succinate/malate CoA ligase beta subunit family. As to quaternary structure, heterotetramer of two alpha and two beta subunits. Requires Mg(2+) as cofactor.

The enzyme catalyses succinate + ATP + CoA = succinyl-CoA + ADP + phosphate. The catalysed reaction is GTP + succinate + CoA = succinyl-CoA + GDP + phosphate. The protein operates within carbohydrate metabolism; tricarboxylic acid cycle; succinate from succinyl-CoA (ligase route): step 1/1. In terms of biological role, succinyl-CoA synthetase functions in the citric acid cycle (TCA), coupling the hydrolysis of succinyl-CoA to the synthesis of either ATP or GTP and thus represents the only step of substrate-level phosphorylation in the TCA. The beta subunit provides nucleotide specificity of the enzyme and binds the substrate succinate, while the binding sites for coenzyme A and phosphate are found in the alpha subunit. The sequence is that of Succinate--CoA ligase [ADP-forming] subunit beta from Polaromonas sp. (strain JS666 / ATCC BAA-500).